The primary structure comprises 200 residues: Putative NAD(P)H nitroreductase Spy0809 (200 aa).

FMN is required as a cofactor.

The chain is Putative NAD(P)H nitroreductase Spy0809 from Streptococcus pyogenes serotype M6 (strain ATCC BAA-946 / MGAS10394).